Reading from the N-terminus, the 167-residue chain is Large ribosomal subunit protein bL9 (167 aa).

It belongs to the bacterial ribosomal protein bL9 family.

Functionally, binds to the 23S rRNA. This Chlamydia muridarum (strain MoPn / Nigg) protein is Large ribosomal subunit protein bL9.